A 223-amino-acid chain; its full sequence is Trichome differentiation protein GL1 (223 aa).

2 HTH myb-type domains span residues 11–63 (NQEY…MNYL) and 64–118 (SPNV…SKKL). 2 consecutive DNA-binding regions (H-T-H motif) follow at residues 39 to 63 (WNRIVRKTGLKRCGKSCRLRWMNYL) and 91 to 114 (WSLIAKRVPGRTDNQVKNYWNTHL).

The protein resides in the nucleus. Its function is as follows. Regulates the production of a signal that induces hair (trichome) precursor cells on leaf primordia to differentiate. The polypeptide is Trichome differentiation protein GL1 (GL1) (Arabidopsis lyrata (Lyre-leaved rock-cress)).